We begin with the raw amino-acid sequence, 171 residues long: Shikimate kinase (171 aa).

Position 13–18 (13–18) interacts with ATP; that stretch reads GVGKST. Residue S17 participates in Mg(2+) binding. D35, R59, and G81 together coordinate substrate. R118 serves as a coordination point for ATP. R136 provides a ligand contact to substrate. R153 contacts ATP.

This sequence belongs to the shikimate kinase family. Monomer. It depends on Mg(2+) as a cofactor.

Its subcellular location is the cytoplasm. The catalysed reaction is shikimate + ATP = 3-phosphoshikimate + ADP + H(+). It participates in metabolic intermediate biosynthesis; chorismate biosynthesis; chorismate from D-erythrose 4-phosphate and phosphoenolpyruvate: step 5/7. Functionally, catalyzes the specific phosphorylation of the 3-hydroxyl group of shikimic acid using ATP as a cosubstrate. The polypeptide is Shikimate kinase (Streptomyces avermitilis (strain ATCC 31267 / DSM 46492 / JCM 5070 / NBRC 14893 / NCIMB 12804 / NRRL 8165 / MA-4680)).